The primary structure comprises 479 residues: Endo-beta-1,6-galactanase (479 aa).

The N-terminal stretch at 1–20 is a signal peptide; it reads MRSIVLPSLALALFSQRARA. Residue Asn89 is glycosylated (N-linked (GlcNAc...) asparagine). The Proton donor role is filled by Glu210. N-linked (GlcNAc...) asparagine glycosylation is present at Asn271. The Nucleophile role is filled by Glu311. Residue Asn358 is glycosylated (N-linked (GlcNAc...) asparagine).

The enzyme catalyses Endohydrolysis of (1-&gt;6)-beta-D-galactosidic linkages in arabinogalactan proteins and (1-&gt;3):(1-&gt;6)-beta-galactans to yield galactose and beta-(1-&gt;6)-galactaobiose as the final products.. Its function is as follows. Hydrolyzes galactooligomers with a degree of polymerization higher than 3. Hydrolyzes radish root arabinogalactan-protein. Does not hydrolyze dextran, arabinan, starch, laminarin, beta-1,4- and beta-1,3-galactans, larch wood arabinogalactan or acid-insoluble polygalacturonic acid. The polypeptide is Endo-beta-1,6-galactanase (Hypocrea rufa (Trichoderma viride)).